We begin with the raw amino-acid sequence, 453 residues long: Chromosomal replication initiator protein DnaA (453 aa).

The domain I, interacts with DnaA modulators stretch occupies residues 1–78; it reads MTENEQLFWN…FEIFNAEITA (78 aa). The segment at 78 to 112 is domain II; sequence ANYVSNDLHLQETSFSNYQQSSNEVNTLPIRKIDS. The segment at 113–331 is domain III, AAA+ region; the sequence is NLKEKYTFAN…GALKNISLVA (219 aa). Residues Gly157, Gly159, Lys160, and Thr161 each contribute to the ATP site. Residues 332–453 form a domain IV, binds dsDNA region; sequence DFKHAKTITV…EIETIKNKIR (122 aa).

This sequence belongs to the DnaA family. As to quaternary structure, oligomerizes as a right-handed, spiral filament on DNA at oriC.

It localises to the cytoplasm. Functionally, plays an essential role in the initiation and regulation of chromosomal replication. ATP-DnaA binds to the origin of replication (oriC) to initiate formation of the DNA replication initiation complex once per cell cycle. Binds the DnaA box (a 9 base pair repeat at the origin) and separates the double-stranded (ds)DNA. Forms a right-handed helical filament on oriC DNA; dsDNA binds to the exterior of the filament while single-stranded (ss)DNA is stabiized in the filament's interior. The ATP-DnaA-oriC complex binds and stabilizes one strand of the AT-rich DNA unwinding element (DUE), permitting loading of DNA polymerase. After initiation quickly degrades to an ADP-DnaA complex that is not apt for DNA replication. Binds acidic phospholipids. The chain is Chromosomal replication initiator protein DnaA from Streptococcus agalactiae serotype Ia (strain ATCC 27591 / A909 / CDC SS700).